The chain runs to 135 residues: Transcriptional activator protein (135 aa).

A Nuclear localization signal motif is present at residues 17–32; that stretch reads KIQHHIAKKRQVRRRR. The segment at 37 to 54 is a zinc-finger region; it reads CGCSYYIHLDCINHGFTH. Residues 120-135 form a transactivation region; the sequence is HLDDLTVSDWSFFKSL.

Belongs to the geminiviridae transcriptional activator protein family. In terms of assembly, monomer. Homodimer. Homooligomer. Self-interaction correlates with nuclear localization and efficient activation of transcription. Monomers suppress local silencing by interacting with and inactivating host adenosine kinase 2 (ADK2) in the cytoplasm. Interacts with and inhibits host SNF1 kinase. Binds to ssDNA. May interact with host RPS27A. Phosphorylated.

It localises to the host nucleus. Its subcellular location is the host cytoplasm. Functionally, multifunctional protein that modulates host antiviral defenses and promotes host attractiveness to insect vectors. Acts as a suppressor of RNA-mediated gene silencing, also known as post-transcriptional gene silencing (PTGS), a mechanism of plant viral defense that limits the accumulation of viral RNAs. TrAP suppresses the host RNA silencing by inhibiting adenosine kinase 2 (ADK2), a kinase involved in a general methylation pathway. Also suppresses the host basal defense by interacting with and inhibiting SNF1 kinase, a key regulator of cell metabolism implicated in innate antiviral defense. Its function is as follows. Inhibits signal transduction by the phytohormone jasmonate, making the infected plant more attractive to aphids, which are the second host to play a role as a dissemination vector. Acts by binding to ubiquitin precursor RPS27A, thereby preventing ubiquitin degradation of JAZ. The protein is Transcriptional activator protein of Tomato yellow leaf curl Sardinia virus (isolate Spain-1) (TYLCSV).